A 123-amino-acid polypeptide reads, in one-letter code: Molluscan insulin-related peptide 1 (123 aa).

Positions 1 to 31 are cleaved as a signal peptide; sequence MAGVRLVFTKAFMVTVLLTLLLNIGVKPAEG. Position 32 is a pyrrolidone carboxylic acid (Q32). Cystine bridges form between C48/C109, C60/C122, and C108/C113. Positions 68 to 69 are excised as a propeptide; the sequence is MV. Pyrrolidone carboxylic acid is present on Q99.

This sequence belongs to the insulin family. As to quaternary structure, heterodimer of a B chain and an A chain linked by two disulfide bonds. Expressed in the cerebral light-green cells which are giant neuroendocrines cells involved in the control of growth.

It is found in the cytoplasmic vesicle. It localises to the secretory vesicle. This Lymnaea stagnalis (Great pond snail) protein is Molluscan insulin-related peptide 1.